The primary structure comprises 151 residues: uncharacterized protein (151 aa).

The segment at 1–24 (MHAKTKKLGTDTSYKRPQVTAQEQ) is disordered.

This is an uncharacterized protein from Acanthamoeba polyphaga mimivirus (APMV).